The primary structure comprises 95 residues: Small ribosomal subunit protein uS19 (95 aa).

The protein belongs to the universal ribosomal protein uS19 family.

Its function is as follows. Protein S19 forms a complex with S13 that binds strongly to the 16S ribosomal RNA. The chain is Small ribosomal subunit protein uS19 from Chloroflexus aurantiacus (strain ATCC 29366 / DSM 635 / J-10-fl).